The following is a 180-amino-acid chain: Large ribosomal subunit protein uL5 (180 aa).

The protein belongs to the universal ribosomal protein uL5 family. In terms of assembly, part of the 50S ribosomal subunit; part of the 5S rRNA/L5/L18/L25 subcomplex. Contacts the 5S rRNA and the P site tRNA. Forms a bridge to the 30S subunit in the 70S ribosome.

In terms of biological role, this is one of the proteins that bind and probably mediate the attachment of the 5S RNA into the large ribosomal subunit, where it forms part of the central protuberance. In the 70S ribosome it contacts protein S13 of the 30S subunit (bridge B1b), connecting the 2 subunits; this bridge is implicated in subunit movement. Contacts the P site tRNA; the 5S rRNA and some of its associated proteins might help stabilize positioning of ribosome-bound tRNAs. In Ralstonia nicotianae (strain ATCC BAA-1114 / GMI1000) (Ralstonia solanacearum), this protein is Large ribosomal subunit protein uL5.